We begin with the raw amino-acid sequence, 258 residues long: MTTRTPLMAGNWKMNLNHLEAIAHVQKLAFALADKDYDAVEVAVLAPFTDLRSVQTLVDGDKLKIKYGAQDISAHDGGAYTGEISGPMLAKLKCTYVAVGHSERRQYHAETDEIVNAKVKAAYKHGLTPILCVGEELDVREAGNHVEHTLAQVEGGLKDLAAEQAESVVIAYEPVWAIGTGKVCGADDAQEVCAAIRGKLAELYSQELADKVRIQYGGSVKSGNVAEIMAKPDIDGALVGGASLDSDEFVKIVRFRDQ.

11-13 (NWK) serves as a coordination point for substrate. Residue H101 is the Electrophile of the active site. The active-site Proton acceptor is the E173. Residues G179, S219, and 240–241 (GG) each bind substrate.

It belongs to the triosephosphate isomerase family. As to quaternary structure, homodimer.

The protein localises to the cytoplasm. It carries out the reaction D-glyceraldehyde 3-phosphate = dihydroxyacetone phosphate. The protein operates within carbohydrate biosynthesis; gluconeogenesis. It functions in the pathway carbohydrate degradation; glycolysis; D-glyceraldehyde 3-phosphate from glycerone phosphate: step 1/1. Its function is as follows. Involved in the gluconeogenesis. Catalyzes stereospecifically the conversion of dihydroxyacetone phosphate (DHAP) to D-glyceraldehyde-3-phosphate (G3P). This chain is Triosephosphate isomerase, found in Streptomyces coelicolor (strain ATCC BAA-471 / A3(2) / M145).